Reading from the N-terminus, the 632-residue chain is Biosynthetic arginine decarboxylase (632 aa).

Position 101 is an N6-(pyridoxal phosphate)lysine (lysine 101). A substrate-binding site is contributed by 281–291 (FDVGGGLGVDY).

The protein belongs to the Orn/Lys/Arg decarboxylase class-II family. SpeA subfamily. It depends on Mg(2+) as a cofactor. Pyridoxal 5'-phosphate is required as a cofactor.

The catalysed reaction is L-arginine + H(+) = agmatine + CO2. Its pathway is amine and polyamine biosynthesis; agmatine biosynthesis; agmatine from L-arginine: step 1/1. Functionally, catalyzes the biosynthesis of agmatine from arginine. This Klebsiella pneumoniae (strain 342) protein is Biosynthetic arginine decarboxylase.